The following is a 1198-amino-acid chain: MREDDEQYFRRLESDLDTALSVAREARKRGGDPTEDIEIPIAKDMADRVENILGIDGVAERVREMEADPDLSREEAALELAADFANDEVGDYETRAGKVEGAVRTAVALLTEGVVAAPIEGIDRVELLENDDGTEFINIYYAGPIRSAGGTAQALSVLVADYTRTLIGIDEYKARNDETERYAEELSLYDDETGLQYAPKDEETKFIAEHMPIMLDGEATGDEEVSGFRDLERVDTNSARGGMCLVLGEGIAQKAPKIQRYTSQLDEVDWPWLQDLIDGTYKTGEDTDEADADSDDGTDEDAADDSDIDDSSAGDEEADAPSGPPRPDPQKKFLRDLIAGRPVFGHPSEPGGFRLRYGRARNHGFATAGVHPAAMHLIDDFLATGTQIKTERPGKAAGVVPVDTIEGPTVKLANGDVRRVDDPEEALEIRNGVEAILDLGEYLVNYGEFVENNHPLSPAAYAPEWWTQDLAAAGADVQALADSPRVDLEHPSAEQALEWAERYDAPLHPEYTYLWHDLDVERFEALAAAASEGHWAETDGAQQTRPPDGAAESTLVVPRSEPVREALEVLLVEHTQGEETLTVPDAEPLVRSLGLTEGLERTWDELSTAARSYDDGDNAVRAVNEVAPFEVRERAPTRIGCRMGRPEKSEKRDLSPAVHTLFPIGEAGGSQRDIAEAATHAESMQDTPGEVEVQVGRRQCPACDTETFRARCPDCESVTDPRYVCYDCNIDVDPDESGRAICPNCEREADAVQNRTVNVHEEYRSALSNVGERENAFDVLKGVKGLSSEHKVPEPIEKGVLRAKHGVSAFKDGTVRYDMTDLPVTSVRAAELDVTADQLRSLGYETDIHGEPLTHEDQLVELRVQDVVLSNGAAEHMLRTADFVDDLLEQYYGLEPFYDAEDRDDIVGELVFGMAPHTSAAVVGRVIGFTSAAVGYAHPYFHAAKRRNCDGDEDCVMLLLDGLLNFSKTFLPDQRGGRMDAPLVMSSRIDPAEIDDEAHNMDIVSSYPRAFFEATREMADPGEVESLIQLGEDTLGTADEYRGFEHTHDTVDLAAGPDLSAYKTLGDMMEKMDAQLELSRKLRSVDETDVAERVIEYHFLPDIIGNLRAFSRQETRCLDCGEKYRRVPLTGDCRECGGRVNLTVHQGSVNKYIDTAIQVAEEYGCREYTKQRLRILDRAVESIFEDDTNKQSGIADFM.

Disordered regions lie at residues 281 to 332 (YKTG…PQKK) and 534 to 553 (HWAE…AAES). Residues 286–319 (DTDEADADSDDGTDEDAADDSDIDDSSAGDEEAD) show a composition bias toward acidic residues.

Belongs to the archaeal DNA polymerase II family. In terms of assembly, heterodimer of a large subunit and a small subunit.

It catalyses the reaction DNA(n) + a 2'-deoxyribonucleoside 5'-triphosphate = DNA(n+1) + diphosphate. It carries out the reaction Exonucleolytic cleavage in the 3'- to 5'-direction to yield nucleoside 5'-phosphates.. Its function is as follows. Possesses two activities: a DNA synthesis (polymerase) and an exonucleolytic activity that degrades single-stranded DNA in the 3'- to 5'-direction. Has a template-primer preference which is characteristic of a replicative DNA polymerase. In Natronomonas pharaonis (strain ATCC 35678 / DSM 2160 / CIP 103997 / JCM 8858 / NBRC 14720 / NCIMB 2260 / Gabara) (Halobacterium pharaonis), this protein is DNA polymerase II large subunit.